Consider the following 201-residue polypeptide: Large ribosomal subunit protein uL4 (201 aa).

The disordered stretch occupies residues R44 to G71.

It belongs to the universal ribosomal protein uL4 family. Part of the 50S ribosomal subunit.

One of the primary rRNA binding proteins, this protein initially binds near the 5'-end of the 23S rRNA. It is important during the early stages of 50S assembly. It makes multiple contacts with different domains of the 23S rRNA in the assembled 50S subunit and ribosome. In terms of biological role, forms part of the polypeptide exit tunnel. The sequence is that of Large ribosomal subunit protein uL4 from Escherichia fergusonii (strain ATCC 35469 / DSM 13698 / CCUG 18766 / IAM 14443 / JCM 21226 / LMG 7866 / NBRC 102419 / NCTC 12128 / CDC 0568-73).